A 456-amino-acid polypeptide reads, in one-letter code: RuvB-like helicase 1 (456 aa).

70–77 is an ATP binding site; sequence GPPGTGKT.

It belongs to the RuvB family. In terms of assembly, forms homohexameric rings. May form a dodecamer with rept made of two stacked hexameric rings. Component of the chromatin remodeling Ino80 complex. Interacts with Myc and rept. In terms of tissue distribution, higher expression occurs in primordia of mesoderm, anterior and posterior midgut and cephalic furrow early in gastrulation, as well as in endoderm and mesoderm lineages during germ band extension. Later in development expression is only maintained in endoderm cells. Expressed in thoracic and abdominal segment neural precursors of all embryonic chordotonal organs.

It is found in the nucleus. It carries out the reaction ATP + H2O = ADP + phosphate + H(+). In terms of biological role, acts as a transcriptional coactivator in Wg signaling caused by altered arm signaling. Pont and rept interfere antagonistically with nuclear arm signaling function, and are required to enhance or reduce arm activity, respectively. Also an essential cofactor for the normal function of Myc; required for cellular proliferation and growth. Proposed core component of the chromatin remodeling Ino80 complex which is involved in transcriptional regulation, DNA replication and probably DNA repair. This chain is RuvB-like helicase 1, found in Drosophila melanogaster (Fruit fly).